Here is a 120-residue protein sequence, read N- to C-terminus: uncharacterized protein (120 aa).

The N-terminal stretch at 1–27 (MPKIGVSLIVLIMLIIFLAGCNKNEQN) is a signal peptide.

This is an uncharacterized protein from Bacillus subtilis (strain 168).